Reading from the N-terminus, the 440-residue chain is 5-methylthioadenosine/S-adenosylhomocysteine deaminase (440 aa).

Zn(2+) contacts are provided by H69 and H71. Substrate contacts are provided by E98 and H190. Residue H217 participates in Zn(2+) binding. 2 residues coordinate substrate: E220 and D305. Position 305 (D305) interacts with Zn(2+).

The protein belongs to the metallo-dependent hydrolases superfamily. MTA/SAH deaminase family. It depends on Zn(2+) as a cofactor.

It catalyses the reaction S-adenosyl-L-homocysteine + H2O + H(+) = S-inosyl-L-homocysteine + NH4(+). It carries out the reaction S-methyl-5'-thioadenosine + H2O + H(+) = S-methyl-5'-thioinosine + NH4(+). In terms of biological role, catalyzes the deamination of 5-methylthioadenosine and S-adenosyl-L-homocysteine into 5-methylthioinosine and S-inosyl-L-homocysteine, respectively. Is also able to deaminate adenosine. The sequence is that of 5-methylthioadenosine/S-adenosylhomocysteine deaminase from Desulfovibrio desulfuricans (strain ATCC 27774 / DSM 6949 / MB).